Reading from the N-terminus, the 401-residue chain is Exodeoxyribonuclease 7 large subunit (401 aa).

It belongs to the XseA family. As to quaternary structure, heterooligomer composed of large and small subunits.

Its subcellular location is the cytoplasm. The catalysed reaction is Exonucleolytic cleavage in either 5'- to 3'- or 3'- to 5'-direction to yield nucleoside 5'-phosphates.. In terms of biological role, bidirectionally degrades single-stranded DNA into large acid-insoluble oligonucleotides, which are then degraded further into small acid-soluble oligonucleotides. This Clostridioides difficile (strain 630) (Peptoclostridium difficile) protein is Exodeoxyribonuclease 7 large subunit.